We begin with the raw amino-acid sequence, 499 residues long: Cytochrome P450 71A27 (499 aa).

Residues 3 to 23 (MILISLCLTTLLAFLFLKPLL) form a helical membrane-spanning segment. Position 438 (cysteine 438) interacts with heme.

This sequence belongs to the cytochrome P450 family. The cofactor is heme.

It is found in the membrane. This Arabidopsis thaliana (Mouse-ear cress) protein is Cytochrome P450 71A27 (CYP71A27).